The chain runs to 193 residues: nitroreductase FRM2 (193 aa).

This sequence belongs to the nitroreductase family. The cofactor is FMN.

The protein localises to the cytoplasm. Its subcellular location is the nucleus. It catalyses the reaction 4-(hydroxyamino)quinoline N-oxide + 2 NAD(+) + H2O = 4-nitroquinoline N-oxide + 2 NADH + 2 H(+). Functionally, type II nitroreductase, able to reduce 4-nitroquinoline N-oxide (4-NQO) into 4-aminoquinoline-N-oxide (4-AQO) via 4-hydroxyaminoquinoline (4-HAQO), using NADH as reductant. involved in the oxidative stress response. Plays a possible role in the metal stress response. Involved in negative regulation of fatty acid metabolism. This is nitroreductase FRM2 from Saccharomyces cerevisiae (strain ATCC 204508 / S288c) (Baker's yeast).